A 43-amino-acid polypeptide reads, in one-letter code: Protein PsbN (43 aa).

A helical transmembrane segment spans residues 7-27; it reads IAIFISCLIVSFTGYALYTAF.

Belongs to the PsbN family.

Its subcellular location is the plastid. It is found in the chloroplast thylakoid membrane. In terms of biological role, may play a role in photosystem I and II biogenesis. This is Protein PsbN from Psilotum nudum (Whisk fern).